A 104-amino-acid polypeptide reads, in one-letter code: MEKIRLKLKAYDHRVLDRSVASIVEAVKRTGADLRGPIPLPTKIRRYTVIKGPHVNKDSREQFEIRVHSRIIDIIVATPETVDSLMKLDLAPEVDVEVRSMGQE.

The protein belongs to the universal ribosomal protein uS10 family. In terms of assembly, part of the 30S ribosomal subunit.

Its function is as follows. Involved in the binding of tRNA to the ribosomes. This is Small ribosomal subunit protein uS10 from Aliarcobacter butzleri (strain RM4018) (Arcobacter butzleri).